The primary structure comprises 530 residues: Na(+)/H(+) antiporter NhaB (530 aa).

A run of 12 helical transmembrane segments spans residues 13 to 33, 34 to 54, 90 to 110, 121 to 141, 145 to 165, 205 to 225, 241 to 261, 306 to 326, 327 to 347, 351 to 371, 455 to 475, and 481 to 501; these read FLGKAPDWYKIAILSFLVINP, LVFFFVDPFTAGWLLVVEFIF, LVANIEVLLLLVFMVAGIYFM, ILIGIKSKTALSVAFCFTAAF, FLDALTVIAVVISVAVGFYAI, LLIHAGVGTALGGVMTMVGEP, FIIRMLPITAPVFICGILTCI, GLIAVWLIVGLALHLAAVGLI, GLSVIILATAFTGVIEEHSMG, EEALPFTALLAVFFAVVAVII, GQAAFLFLLTSALAPLIQLSY, and MALPYTIVLALVGMFGIIFFL.

This sequence belongs to the NhaB Na(+)/H(+) (TC 2.A.34) antiporter family.

The protein resides in the cell inner membrane. The catalysed reaction is 2 Na(+)(in) + 3 H(+)(out) = 2 Na(+)(out) + 3 H(+)(in). In terms of biological role, na(+)/H(+) antiporter that extrudes sodium in exchange for external protons. This chain is Na(+)/H(+) antiporter NhaB, found in Aliivibrio fischeri (strain MJ11) (Vibrio fischeri).